The following is a 232-amino-acid chain: BTB/POZ domain-containing protein KCTD11 (232 aa).

The region spanning 1 to 49 is the BTB domain; it reads MLGAMFRADTLMPANLNPQGDGHYFIDRDGKAFRHILNFLRLGRLDLPR.

As to quaternary structure, homopentamer. Interacts with KCTD6 and KCTD21; KCTD11 and KCTD6 or KCTD21 may associate in pentameric assemblies. Component of the BCR(KCTD11) E3 ubiquitin ligase complex, at least composed of CUL3 and KCTD11 and RBX1. Interacts (via BTB domain) with CUL3; initially a 4:4 stoichiometry has been reported, however, electron microscopy revealed pentameric states of the BTB domain. As to expression, weakly expressed in lung. In the cerebellum, higher expression in non proliferating external granule cells layer than in highly proliferating ones.

It participates in protein modification; protein ubiquitination. Its function is as follows. Plays a role as a marker and a regulator of neuronal differentiation; Up-regulated by a variety of neurogenic signals, such as retinoic acid, epidermal growth factor/EGF and NGFB/nerve growth factor. Induces apoptosis, growth arrest and the expression of cyclin-dependent kinase inhibitor CDKN1B. Plays a role as a tumor repressor and inhibits cell growth and tumorigenicity of medulloblastoma (MDB). Acts as a probable substrate-specific adapter for a BCR (BTB-CUL3-RBX1) E3 ubiquitin-protein ligase complex towards HDAC1. Functions as antagonist of the Hedgehog pathway on cell proliferation and differentiation by affecting the nuclear transfer of transcription factor GLI1, thus maintaining cerebellar granule cells in undifferentiated state, this effect probably occurs via HDAC1 down-regulation, keeping GLI1 acetylated and inactive. When knock-down, Hedgehog antagonism is impaired and proliferation of granule cells is sustained. Activates the caspase cascade. The polypeptide is BTB/POZ domain-containing protein KCTD11 (Kctd11) (Mus musculus (Mouse)).